Consider the following 492-residue polypeptide: Protein nucleotidyltransferase YdiU (492 aa).

Residues G88, G90, R91, K111, D123, G124, R174, and R181 each contribute to the ATP site. D250 acts as the Proton acceptor in catalysis. Residues N251 and D260 each contribute to the Mg(2+) site. D260 serves as a coordination point for ATP.

It belongs to the SELO family. Mg(2+) is required as a cofactor. The cofactor is Mn(2+).

The catalysed reaction is L-seryl-[protein] + ATP = 3-O-(5'-adenylyl)-L-seryl-[protein] + diphosphate. It carries out the reaction L-threonyl-[protein] + ATP = 3-O-(5'-adenylyl)-L-threonyl-[protein] + diphosphate. It catalyses the reaction L-tyrosyl-[protein] + ATP = O-(5'-adenylyl)-L-tyrosyl-[protein] + diphosphate. The enzyme catalyses L-histidyl-[protein] + UTP = N(tele)-(5'-uridylyl)-L-histidyl-[protein] + diphosphate. The catalysed reaction is L-seryl-[protein] + UTP = O-(5'-uridylyl)-L-seryl-[protein] + diphosphate. It carries out the reaction L-tyrosyl-[protein] + UTP = O-(5'-uridylyl)-L-tyrosyl-[protein] + diphosphate. Its function is as follows. Nucleotidyltransferase involved in the post-translational modification of proteins. It can catalyze the addition of adenosine monophosphate (AMP) or uridine monophosphate (UMP) to a protein, resulting in modifications known as AMPylation and UMPylation. This is Protein nucleotidyltransferase YdiU from Rhodopseudomonas palustris (strain TIE-1).